Consider the following 204-residue polypeptide: Large ribosomal subunit protein uL22m (204 aa).

The N-terminal 38 residues, 1 to 38 (MAAVILERLGALWVQNLRGKLALGILPQSHIHTSASLE), are a transit peptide targeting the mitochondrion.

The protein belongs to the universal ribosomal protein uL22 family. Component of the mitochondrial ribosome large subunit (39S) which comprises a 16S rRNA and about 50 distinct proteins.

It is found in the mitochondrion. This is Large ribosomal subunit protein uL22m (MRPL22) from Bos taurus (Bovine).